A 75-amino-acid polypeptide reads, in one-letter code: Cytochrome c oxidase assembly factor 5 (75 aa).

The region spanning 28–66 (QSDCVLQEGKSPKECLKEGYCKALQVTFFECKRSILDNR) is the CHCH domain. The Cx10C motif motif lies at 31–42 (CVLQEGKSPKEC). 2 disulfide bridges follow: C31-C58 and C42-C48. Positions 48–58 (CKALQVTFFEC) match the Cx9C motif motif.

It belongs to the PET191 family.

In terms of biological role, involved in an early step of the mitochondrial complex IV assembly process. The polypeptide is Cytochrome c oxidase assembly factor 5 (coa5) (Xenopus laevis (African clawed frog)).